The sequence spans 559 residues: 5'-AMP-activated protein kinase catalytic subunit alpha-1 (559 aa).

The 253-residue stretch at 27 to 279 (YILGDTLGVG…IKDIREHEWF (253 aa)) folds into the Protein kinase domain. T32 is modified (phosphothreonine). ATP contacts are provided by residues 33–41 (LGVGTFGKV) and K56. D150 (proton acceptor) is an active-site residue. At T183 the chain carries Phosphothreonine; by LKB1 and CaMKK2. 2 positions are modified to phosphothreonine: T269 and T355. The interval 302–381 (EALKEVCEKF…PERVPFLVAE (80 aa)) is AIS. S356 bears the Phosphoserine mark. Phosphoserine; by ULK1 is present on S360. At T368 the chain carries Phosphothreonine; by ULK1. T382 bears the Phosphothreonine mark. Phosphoserine occurs at positions 397, 467, and 486. A compositionally biased stretch (polar residues) spans 485 to 505 (KSGTATPQRSGSVSNYRSCQR). The segment at 485–536 (KSGTATPQRSGSVSNYRSCQRSDSDAEAQGKSSEVSLTSSVTSLDSSPVDLT) is disordered. Phosphothreonine is present on residues T488 and T490. Phosphoserine is present on residues S496, S508, S524, and S527. Positions 516 to 535 (SSEVSLTSSVTSLDSSPVDL) are enriched in low complexity.

Belongs to the protein kinase superfamily. CAMK Ser/Thr protein kinase family. SNF1 subfamily. AMPK is a heterotrimer of an alpha catalytic subunit (PRKAA1 or PRKAA2), a beta (PRKAB1 or PRKAB2) and a gamma non-catalytic subunits (PRKAG1, PRKAG2 or PRKAG3). Interacts with FNIP1 and FNIP2. As to quaternary structure, (Microbial infection) Interacts with Dengue type 2 virus non-structural protein 1; this interaction promotes the AMPK/ERK/mTOR signaling pathway to induce autophagy. Requires Mg(2+) as cofactor. Post-translationally, ubiquitinated. In terms of processing, phosphorylated at Thr-183 by STK11/LKB1 in complex with STE20-related adapter-alpha (STRADA) pseudo kinase and CAB39. Also phosphorylated at Thr-183 by CAMKK2; triggered by a rise in intracellular calcium ions, without detectable changes in the AMP/ATP ratio. CAMKK1 can also phosphorylate Thr-183, but at a much lower level. Dephosphorylated by protein phosphatase 2A and 2C (PP2A and PP2C). Phosphorylated by ULK1 and ULK2; leading to negatively regulate AMPK activity and suggesting the existence of a regulatory feedback loop between ULK1, ULK2 and AMPK. Dephosphorylated by PPM1A and PPM1B. Glycosylated; O-GlcNAcylated by OGT, promoting the AMP-activated protein kinase (AMPK) activity.

It localises to the cytoplasm. The protein resides in the nucleus. The enzyme catalyses L-seryl-[protein] + ATP = O-phospho-L-seryl-[protein] + ADP + H(+). It catalyses the reaction L-threonyl-[protein] + ATP = O-phospho-L-threonyl-[protein] + ADP + H(+). It carries out the reaction L-seryl-[acetyl-CoA carboxylase] + ATP = O-phospho-L-seryl-[acetyl-CoA carboxylase] + ADP + H(+). The catalysed reaction is L-seryl-[3-hydroxy-3-methylglutaryl-coenzyme A reductase] + ATP = O-phospho-L-seryl-[3-hydroxy-3-methylglutaryl-coenzyme A reductase] + ADP + H(+). The enzyme catalyses L-seryl-[tau protein] + ATP = O-phospho-L-seryl-[tau protein] + ADP + H(+). It catalyses the reaction L-threonyl-[tau protein] + ATP = O-phospho-L-threonyl-[tau protein] + ADP + H(+). Activated by phosphorylation on Thr-183. Binding of AMP to non-catalytic gamma subunit (PRKAG1, PRKAG2 or PRKAG3) results in allosteric activation, inducing phosphorylation on Thr-183. AMP-binding to gamma subunit also sustains activity by preventing dephosphorylation of Thr-183. ADP also stimulates Thr-183 phosphorylation, without stimulating already phosphorylated AMPK. ATP promotes dephosphorylation of Thr-183, rendering the enzyme inactive. Under physiological conditions AMPK mainly exists in its inactive form in complex with ATP, which is much more abundant than AMP. AMPK is activated by antihyperglycemic drug metformin, a drug prescribed to patients with type 2 diabetes: in vivo, metformin seems to mainly inhibit liver gluconeogenesis. However, metformin can be used to activate AMPK in muscle and other cells in culture or ex vivo. Selectively inhibited by compound C (6-[4-(2-Piperidin-1-yl-ethoxy)-phenyl)]-3-pyridin-4-yl-pyyrazolo[1,5-a] pyrimidine. Activated by resveratrol, a natural polyphenol present in red wine, and S17834, a synthetic polyphenol. Functionally, catalytic subunit of AMP-activated protein kinase (AMPK), an energy sensor protein kinase that plays a key role in regulating cellular energy metabolism. In response to reduction of intracellular ATP levels, AMPK activates energy-producing pathways and inhibits energy-consuming processes: inhibits protein, carbohydrate and lipid biosynthesis, as well as cell growth and proliferation. AMPK acts via direct phosphorylation of metabolic enzymes, and by longer-term effects via phosphorylation of transcription regulators. Regulates lipid synthesis by phosphorylating and inactivating lipid metabolic enzymes such as ACACA, ACACB, GYS1, HMGCR and LIPE; regulates fatty acid and cholesterol synthesis by phosphorylating acetyl-CoA carboxylase (ACACA and ACACB) and hormone-sensitive lipase (LIPE) enzymes, respectively. Promotes lipolysis of lipid droplets by mediating phosphorylation of isoform 1 of CHKA (CHKalpha2). Regulates insulin-signaling and glycolysis by phosphorylating IRS1, PFKFB2 and PFKFB3. AMPK stimulates glucose uptake in muscle by increasing the translocation of the glucose transporter SLC2A4/GLUT4 to the plasma membrane, possibly by mediating phosphorylation of TBC1D4/AS160. Regulates transcription and chromatin structure by phosphorylating transcription regulators involved in energy metabolism such as CRTC2/TORC2, FOXO3, histone H2B, HDAC5, MEF2C, MLXIPL/ChREBP, EP300, HNF4A, p53/TP53, SREBF1, SREBF2 and PPARGC1A. Acts as a key regulator of glucose homeostasis in liver by phosphorylating CRTC2/TORC2, leading to CRTC2/TORC2 sequestration in the cytoplasm. In response to stress, phosphorylates 'Ser-36' of histone H2B (H2BS36ph), leading to promote transcription. Acts as a key regulator of cell growth and proliferation by phosphorylating FNIP1, TSC2, RPTOR, WDR24 and ATG1/ULK1: in response to nutrient limitation, negatively regulates the mTORC1 complex by phosphorylating RPTOR component of the mTORC1 complex and by phosphorylating and activating TSC2. Also phosphorylates and inhibits GATOR2 subunit WDR24 in response to nutrient limitation, leading to suppress glucose-mediated mTORC1 activation. In response to energetic stress, phosphorylates FNIP1, inactivating the non-canonical mTORC1 signaling, thereby promoting nuclear translocation of TFEB and TFE3, and inducing transcription of lysosomal or autophagy genes. In response to nutrient limitation, promotes autophagy by phosphorylating and activating ATG1/ULK1. In that process, it also activates WDR45/WIPI4. Phosphorylates CASP6, thereby preventing its autoprocessing and subsequent activation. In response to nutrient limitation, phosphorylates transcription factor FOXO3 promoting FOXO3 mitochondrial import. Also acts as a regulator of cellular polarity by remodeling the actin cytoskeleton; probably by indirectly activating myosin. AMPK also acts as a regulator of circadian rhythm by mediating phosphorylation of CRY1, leading to destabilize it. May regulate the Wnt signaling pathway by phosphorylating CTNNB1, leading to stabilize it. Also has tau-protein kinase activity: in response to amyloid beta A4 protein (APP) exposure, activated by CAMKK2, leading to phosphorylation of MAPT/TAU; however the relevance of such data remains unclear in vivo. Also phosphorylates CFTR, EEF2K, KLC1, NOS3 and SLC12A1. Regulates hepatic lipogenesis. Activated via SIRT3, represses sterol regulatory element-binding protein (SREBP) transcriptional activities and ATP-consuming lipogenesis to restore cellular energy balance. Upon stress, regulates mitochondrial fragmentation through phosphorylation of MTFR1L. This chain is 5'-AMP-activated protein kinase catalytic subunit alpha-1, found in Homo sapiens (Human).